The sequence spans 557 residues: MTESFAQLFEESLKEIETRPGSIVRGVVVAIDKDVVLVDAGLKSESAIPAEQFKNAQGELEIQVGDEVDVALDAVEDGFGETLLSREKAKRHEAWITLEKAYEDAETVTGVINGKVKGGFTVELNGIRAFLPGSLVDVRPVRDTLHLEGKELEFKVIKLDQKRNNVVVSRRAVIESENSAERDQLLENLQEGMEVKGIVKNLTDYGAFVDLGGVDGLLHITDMAWKRVKHPSEIVNVGDEITVKVLKFDRERTRVSLGLKQLGEDPWVAIAKRYPEGTKLTGRVTNLTDYGCFVEIEEGVEGLVHVSEMDWTNKNIHPSKVVNVGDVVEVMVLDIDEERRRISLGLKQCKANPWQQFAETHNKGDRVEGKIKSITDFGIFIGLDGGIDGLVHLSDISWNVAGEEAVREYKKGDEIAAVVLQVDAERERISLGVKQLAEDPFNNWVALNKKGAIVTGKVTAVDAKGATVELADGVEGYLRASEASRDRVEDATLVLSVGDEVEAKFTGVDRKNRAISLSVRAKDEADEKDAIATVNKQEDANFSNNAMAEAFKAAKGE.

4 S1 motif domains span residues 21-87 (GSIV…LSRE), 105-171 (AETV…VSRR), 192-260 (GMEV…LGLK), and 277-347 (GTKL…LGLK). An N6-acetyllysine mark is found at K229, K279, and K363. 2 consecutive S1 motif domains span residues 364 to 434 (GDRV…LGVK) and 451 to 520 (GAIV…LSVR).

The protein belongs to the bacterial ribosomal protein bS1 family. As to quaternary structure, part of the 30S ribosomal subunit. Some nascent polypeptide chains are able to cross-link to this protein in situ. Can be cross-linked to mRNA in the ribosome. Phosphorylated; probably on a serine.

In terms of biological role, required for translation of most natural mRNAs except for leaderless mRNA. Binds mRNA upstream of the Shine-Dalgarno (SD) sequence and helps it bind to the 30S ribosomal subunit; acts as an RNA chaperone to unfold structured mRNA on the ribosome but is not essential for mRNAs with strong SDs and little 5'-UTR structure, thus it may help fine-tune which mRNAs that are translated. Unwinds dsRNA by binding to transiently formed ssRNA regions; binds about 10 nucleotides. Has a preference for polypyrimidine tracts. Negatively autoregulates its own translation. In Escherichia coli O157:H7, this protein is Small ribosomal subunit protein bS1 (rpsA).